A 274-amino-acid chain; its full sequence is uncharacterized protein (274 aa).

Over residues 1 to 17 (MTQLTNFSESFSNQNSN) the composition is skewed to low complexity. 2 disordered regions span residues 1 to 38 (MTQLTNFSESFSNQNSNLHQPYNFNSHQPPEENHYYVR) and 222 to 274 (ELGT…MEFE). The span at 18–28 (LHQPYNFNSHQ) shows a compositional bias: polar residues. Positions 29–38 (PPEENHYYVR) are enriched in basic and acidic residues. Composition is skewed to polar residues over residues 239–249 (PMASPTGSSQI) and 256–265 (SPNSLTNGSV).

This is an uncharacterized protein from Caenorhabditis elegans.